The primary structure comprises 380 residues: MRTRRQTYPPIAESLTARSIVQALPASATISGNGGPKKKKNCVNRGLWDKQIPTDLLQEILSRLGLKANIHASLVCKTWLKEAVSVRKFQSRPWLFYPQSQRGGPKEGDYVLFNPSRSQTHHLKFPELTGYRNKLACAKDGWLLVVKDNPDVVFFLNPFTGERICLPQVPQNSTRDCLTFSAAPTSTSCCVISFTPQSFLYAVVKVDTWRPGESVWTTHHFDQKRYGEVINRCIFSNGMFYCLSTSGRLSVFDPSRETWNVLPVKPCRAFRRKIMLVRQVFMTEHEGDIFVVTTRRVNNRKLLAFKLNLQGNVWEEMKVPNGLTVFSSDATSLTRAGLPEEERNILYSSDIDDFVKSSHPTFYYYDCSAWLQPPHDNFNF.

An F-box domain is found at 47–94 (LWDKQIPTDLLQEILSRLGLKANIHASLVCKTWLKEAVSVRKFQSRPW). Kelch repeat units lie at residues 190-233 (CVIS…INRC) and 234-279 (IFSN…LVRQ).

This is F-box/kelch-repeat protein At3g18720 from Arabidopsis thaliana (Mouse-ear cress).